The following is a 527-amino-acid chain: Cytochrome P450 714B3 (527 aa).

The Lumenal segment spans residues 1-14 (MEVAMAMAVKVLLS). A helical; Signal-anchor for type III membrane protein transmembrane segment spans residues 15–35 (LCCVGACGLAVYLYHILWLVP). Residues 36–527 (QKVLAKFEDQ…SVCTKRGTAI (492 aa)) are Cytoplasmic-facing. Heme is bound at residue Cys-464.

This sequence belongs to the cytochrome P450 family. Requires heme as cofactor.

It localises to the membrane. In terms of biological role, may be involved in gibberellin metabolism. This Zea mays (Maize) protein is Cytochrome P450 714B3 (CYP714B3).